Here is a 311-residue protein sequence, read N- to C-terminus: Tyrosine recombinase XerC (311 aa).

Residues 14–100 form the Core-binding (CB) domain; the sequence is ESLNETAKKF…SLRTFYKVLL (87 aa). Residues 121–303 enclose the Tyr recombinase domain; sequence EVPKNFRINE…SKEKIKEVYR (183 aa). Residues Arg163, Lys187, His255, Arg258, and His281 contribute to the active site. Catalysis depends on Tyr290, which acts as the O-(3'-phospho-DNA)-tyrosine intermediate.

This sequence belongs to the 'phage' integrase family. XerC subfamily. Forms a cyclic heterotetrameric complex composed of two molecules of XerC and two molecules of XerD.

Its subcellular location is the cytoplasm. Site-specific tyrosine recombinase, which acts by catalyzing the cutting and rejoining of the recombining DNA molecules. The XerC-XerD complex is essential to convert dimers of the bacterial chromosome into monomers to permit their segregation at cell division. It also contributes to the segregational stability of plasmids. This chain is Tyrosine recombinase XerC, found in Leptospira interrogans serogroup Icterohaemorrhagiae serovar copenhageni (strain Fiocruz L1-130).